Here is a 605-residue protein sequence, read N- to C-terminus: Protein kinase wis1 (605 aa).

Positions 1–20 are enriched in polar residues; that stretch reads MSSPNNQPLSCSLRQLSISP. The interval 1 to 141 is disordered; the sequence is MSSPNNQPLS…TPPGPFPGGL (141 aa). Low complexity-rich tracts occupy residues 31–73 and 90–105; these read GSLL…SSPS and RLGR…SLNL. Residues 106-115 show a composition bias toward basic and acidic residues; it reads DMKDPSEKPR. Residue S168 is modified to Phosphoserine. Positions 188–200 are enriched in polar residues; it reads SQLAGRLSNSPVK. Residues 188–263 are disordered; that stretch reads SQLAGRLSNS…PSSMASRRGL (76 aa). Residues 244-256 are compositionally biased toward low complexity; sequence SNSNPTSPVSPSS. Phosphoserine is present on S253. The 260-residue stretch at 320 to 579 folds into the Protein kinase domain; it reads IIKLEELGKG…YHELANHPWL (260 aa). Residues 326–334 and K349 each bind ATP; that span reads LGKGNYGVV. The active-site Proton acceptor is the D441. The residue at position 469 (S469) is a Phosphoserine. T473 is subject to Phosphothreonine.

This sequence belongs to the protein kinase superfamily. STE Ser/Thr protein kinase family. MAP kinase kinase subfamily. In terms of processing, dephosphorylated by pyp1 and pyp2.

The enzyme catalyses L-seryl-[protein] + ATP = O-phospho-L-seryl-[protein] + ADP + H(+). It catalyses the reaction L-threonyl-[protein] + ATP = O-phospho-L-threonyl-[protein] + ADP + H(+). The catalysed reaction is L-tyrosyl-[protein] + ATP = O-phospho-L-tyrosyl-[protein] + ADP + H(+). Functionally, dosage-dependent regulator of mitosis with serine/ threonine protein kinase activity. May play a role in the integration of nutritional sensing with the control over entry into mitosis. It may interact with cdc25, wee1 and win1. May activate sty1. The polypeptide is Protein kinase wis1 (wis1) (Schizosaccharomyces pombe (strain 972 / ATCC 24843) (Fission yeast)).